Consider the following 121-residue polypeptide: uncharacterized protein (121 aa).

The next 2 helical transmembrane spans lie at 16–36 (GFMVFYISLFLILWLAAGFAV) and 74–94 (LYIAAVTVSGFISVYYEMKTI).

The protein resides in the cell membrane. This is an uncharacterized protein from Bacillus subtilis (strain 168).